Consider the following 426-residue polypeptide: DNA polymerase processivity factor component OPG148 (426 aa).

It belongs to the orthopoxvirus OPG148 family. Interacts with the DNA polymerase catalytic subunit OPG071. Interacts with UDG/OPG116. Component of the uracil-DNA glycosylase(UDG)-OPG148-polymerase complex; OPG148 and UDG form a heterodimeric processivity factor that associates with OPG071 to form the processive polymerase holoenzyme. Interacts with OPG117.

Plays an essential role in viral DNA replication by acting as the polymerase processivity factor together with protein OPG116. Serves as a bridge which links the DNA polymerase OPG071 and the uracil DNA glycosylase. This Variola virus (isolate Human/India/Ind3/1967) (VARV) protein is DNA polymerase processivity factor component OPG148 (OPG148).